We begin with the raw amino-acid sequence, 686 residues long: Acyl-CoA synthetase short-chain family member 3, mitochondrial (686 aa).

Residues 1–29 (MKPSWLQCHKVTSAGGLGGPLPGSSPARG) constitute a mitochondrion transit peptide. Residue 227–230 (EPGR) participates in CoA binding. ATP contacts are provided by residues 425 to 427 (GER) and 446 to 451 (DHWWQT). Lys518 is subject to N6-succinyllysine. The residue at position 524 (Lys524) is an N6-acetyllysine. Positions 539, 554, and 565 each coordinate ATP. Arg624 contacts CoA.

Belongs to the ATP-dependent AMP-binding enzyme family.

The protein localises to the mitochondrion matrix. The catalysed reaction is acetate + ATP + CoA = acetyl-CoA + AMP + diphosphate. It carries out the reaction propanoate + ATP + CoA = propanoyl-CoA + AMP + diphosphate. The enzyme catalyses butanoate + ATP + CoA = butanoyl-CoA + AMP + diphosphate. Catalyzes the synthesis of acetyl-CoA from short-chain fatty acids. Propionate is the preferred substrate but can also utilize acetate and butyrate with a much lower affinity. The polypeptide is Acyl-CoA synthetase short-chain family member 3, mitochondrial (ACSS3) (Pongo abelii (Sumatran orangutan)).